The primary structure comprises 105 residues: Co-chaperonin GroES 3 (105 aa).

The protein belongs to the GroES chaperonin family. Heptamer of 7 subunits arranged in a ring. Interacts with the chaperonin GroEL.

The protein localises to the cytoplasm. Functionally, together with the chaperonin GroEL, plays an essential role in assisting protein folding. The GroEL-GroES system forms a nano-cage that allows encapsulation of the non-native substrate proteins and provides a physical environment optimized to promote and accelerate protein folding. GroES binds to the apical surface of the GroEL ring, thereby capping the opening of the GroEL channel. This is Co-chaperonin GroES 3 from Rhizobium meliloti (strain 1021) (Ensifer meliloti).